The chain runs to 982 residues: Serine/threonine-protein kinase SULU (982 aa).

Positions 30–289 (YQDLREIGHG…AEECFRHPFI (260 aa)) constitute a Protein kinase domain. ATP contacts are provided by residues 36–44 (IGHGSFGAV) and lysine 59. Aspartate 153 acts as the Proton acceptor in catalysis. Disordered stretches follow at residues 331 to 484 (GKEG…PLDT), 592 to 620 (QNNELDKRKKDIEDGEKKMKKTKNSQNQQ), 751 to 789 (LETQHEAESASQNEYTQRQQDELRKKHAMQSRQQPRDLK), and 957 to 982 (RTGSTSRSSGGIAPGVGNSSSIQMAM). The span at 353 to 373 (SIGRAGDSASSRSASLTSFRS) shows a compositional bias: low complexity. Residues 421-431 (QMLSSTSTSGV) are compositionally biased toward polar residues. Positions 459–472 (IPTSQPTSKSESSS) are enriched in low complexity. The segment covering 595-608 (ELDKRKKDIEDGEK) has biased composition (basic and acidic residues). Positions 759–768 (SASQNEYTQR) are enriched in polar residues. Residues 957–967 (RTGSTSRSSGG) show a composition bias toward low complexity. The segment covering 973-982 (GNSSSIQMAM) has biased composition (polar residues).

It belongs to the protein kinase superfamily. Ser/Thr protein kinase family. STE20 subfamily. Requires Mg(2+) as cofactor. Expressed in the pharynx, including the pharyngeal muscle of the metacorpus, the isthmus, and the terminal bulb; in the intestine, including the pharyngeointestinal valve between the pharynx and the intestine, a structure near the anus likely to be the anal sphincter and the excretory cell and in several ring neurons.

The protein resides in the cytoplasm. The protein localises to the cytoskeleton. It localises to the cell cortex. The enzyme catalyses L-seryl-[protein] + ATP = O-phospho-L-seryl-[protein] + ADP + H(+). It carries out the reaction L-threonyl-[protein] + ATP = O-phospho-L-threonyl-[protein] + ADP + H(+). Its function is as follows. Acts as a negative regulator of cortical contractions during early embryonic cell division, possibly by regulating rho-1-dependent actomyosin contractility. Plays a role in polarity establishment in early embryos by regulating the size of the anterior and posterior cortex in the first asymmetric cell division. Might play a role in cell cycle progression. In the germline, involved in the regulation of meiotic progression during oogenesis, possibly by modulating the timing of mpk-1 activation. Plays a role in meiotic recombination events. Involved in pharyngeal pumping. The protein is Serine/threonine-protein kinase SULU (kin-18) of Caenorhabditis elegans.